The sequence spans 1319 residues: Son of sevenless homolog 1 (1319 aa).

One can recognise a DH domain in the interval 200-390 (TYYDLVKAFM…LNVQSGMEKI (191 aa)). A PH domain is found at 444-548 (FIMEGTLTRV…AALISLQYRS (105 aa)). One can recognise an N-terminal Ras-GEF domain in the interval 597–741 (GIPIIKAGTV…SITKIIQRKK (145 aa)). The Ras-GEF domain maps to 780–1019 (HPIEIARQLT…FNKSLEIEPR (240 aa)). The segment at 1019-1101 (RHPKPLPRFP…ASGTSSNTDV (83 aa)) is disordered. S1078 and S1082 each carry phosphoserine. Residues S1120 and S1147 each carry the phosphoserine; by RPS6KA3 modification. Residues 1121 to 1319 (VSSISLSKGT…PPLLENAHSS (199 aa)) form a disordered region. Phosphoserine is present on residues S1164, S1196, and S1215. Pro residues predominate over residues 1194 to 1203 (PESPPLLPPR). The span at 1238-1250 (SPSPFTPPPPQTP) shows a compositional bias: pro residues. Position 1261 is a phosphoserine (S1261). Positions 1296-1309 (YKREHTHPSMHRDG) are enriched in basic and acidic residues.

In terms of assembly, interacts (via C-terminus) with GRB2 (via SH3 domain). Forms a complex with phosphorylated MUC1 and GRB2 (via its SH3 domains). Interacts with phosphorylated LAT2. Interacts with NCK1 and NCK2. Part of a complex consisting of ABI1, EPS8 and SOS1. Interacts (Ser-1120 and Ser-1147 phosphorylated form) with YWHAB and YWHAE. Post-translationally, phosphorylation at Ser-1120 and Ser-1147 by RPS6KA3 create YWHAB and YWHAE binding sites and which contribute to the negative regulation of EGF-induced MAPK1/3 phosphorylation. Expressed in most embryonic and adult tissues.

In terms of biological role, promotes the exchange of Ras-bound GDP by GTP. Probably by promoting Ras activation, regulates phosphorylation of MAP kinase MAPK3 in response to EGF. Catalytic component of a trimeric complex that participates in transduction of signals from Ras to Rac by promoting the Rac-specific guanine nucleotide exchange factor (GEF) activity. The sequence is that of Son of sevenless homolog 1 (Sos1) from Mus musculus (Mouse).